Reading from the N-terminus, the 31-residue chain is Protamine-YI (31 aa).

Residues 1–31 (ARRRRSSSRPIRRRRPRRRTTRRRRAGRRRR) form a disordered region.

Testis.

It is found in the nucleus. Its subcellular location is the chromosome. Functionally, protamines substitute for histones in the chromatin of sperm during the haploid phase of spermatogenesis. They compact sperm DNA into a highly condensed, stable and inactive complex. The chain is Protamine-YI from Clupea harengus (Atlantic herring).